The primary structure comprises 150 residues: Transcriptional repressor NrdR (150 aa).

The disordered stretch occupies residues 1-26 (MKCPFCGNSDSKVVDSRPDKGGSGIR). A zinc finger spans residues 3 to 34 (CPFCGNSDSKVVDSRPDKGGSGIRRRRECEQC). Residues 49–139 (PLVLKKDGRR…VYRSFRDINE (91 aa)) enclose the ATP-cone domain.

This sequence belongs to the NrdR family. Requires Zn(2+) as cofactor.

Its function is as follows. Negatively regulates transcription of bacterial ribonucleotide reductase nrd genes and operons by binding to NrdR-boxes. The sequence is that of Transcriptional repressor NrdR from Pelobacter propionicus (strain DSM 2379 / NBRC 103807 / OttBd1).